A 314-amino-acid polypeptide reads, in one-letter code: Aspartate carbamoyltransferase catalytic subunit (314 aa).

Residues arginine 63 and threonine 64 each coordinate carbamoyl phosphate. L-aspartate is bound at residue lysine 91. Residues arginine 113, histidine 143, and glutamine 146 each coordinate carbamoyl phosphate. Residues arginine 176 and arginine 228 each contribute to the L-aspartate site. 2 residues coordinate carbamoyl phosphate: alanine 269 and proline 270.

This sequence belongs to the aspartate/ornithine carbamoyltransferase superfamily. ATCase family. Heterododecamer (2C3:3R2) of six catalytic PyrB chains organized as two trimers (C3), and six regulatory PyrI chains organized as three dimers (R2).

It catalyses the reaction carbamoyl phosphate + L-aspartate = N-carbamoyl-L-aspartate + phosphate + H(+). It functions in the pathway pyrimidine metabolism; UMP biosynthesis via de novo pathway; (S)-dihydroorotate from bicarbonate: step 2/3. Functionally, catalyzes the condensation of carbamoyl phosphate and aspartate to form carbamoyl aspartate and inorganic phosphate, the committed step in the de novo pyrimidine nucleotide biosynthesis pathway. This is Aspartate carbamoyltransferase catalytic subunit from Cutibacterium acnes (strain DSM 16379 / KPA171202) (Propionibacterium acnes).